A 184-amino-acid chain; its full sequence is UPF0179 protein Pcal_2106 (184 aa).

A compositionally biased stretch (low complexity) spans Gly146–Leu161. The disordered stretch occupies residues Gly146 to Pro184.

The protein belongs to the UPF0179 family.

The sequence is that of UPF0179 protein Pcal_2106 from Pyrobaculum calidifontis (strain DSM 21063 / JCM 11548 / VA1).